We begin with the raw amino-acid sequence, 234 residues long: Glucosamine-6-phosphate deaminase (234 aa).

Aspartate 62 serves as the catalytic Proton acceptor; for enolization step. Asparagine 128 (for ring-opening step) is an active-site residue. The Proton acceptor; for ring-opening step role is filled by histidine 130. Glutamate 135 acts as the For ring-opening step in catalysis.

It belongs to the glucosamine/galactosamine-6-phosphate isomerase family. NagB subfamily.

It carries out the reaction alpha-D-glucosamine 6-phosphate + H2O = beta-D-fructose 6-phosphate + NH4(+). It functions in the pathway amino-sugar metabolism; N-acetylneuraminate degradation; D-fructose 6-phosphate from N-acetylneuraminate: step 5/5. In terms of biological role, catalyzes the reversible isomerization-deamination of glucosamine 6-phosphate (GlcN6P) to form fructose 6-phosphate (Fru6P) and ammonium ion. This is Glucosamine-6-phosphate deaminase from Streptococcus pyogenes serotype M3 (strain ATCC BAA-595 / MGAS315).